The sequence spans 1128 residues: Major DNA-binding protein (1128 aa).

A required for nuclear localization region spans residues 1104–1128 (LGGGGQGSGGRRKRRLATVLPGLEV).

Belongs to the herpesviridae major DNA-binding protein family. As to quaternary structure, homooligomers. Forms double-helical filaments necessary for the formation of replication compartments within the host nucleus. Interacts with the origin-binding protein. Interacts with the helicase primase complex; this interaction stimulates primer synthesis activity of the helicase-primase complex. Interacts with the DNA polymerase. Interacts with the alkaline exonuclease; this interaction increases its nuclease processivity.

Its subcellular location is the virion tegument. It localises to the host nucleus. Plays several crucial roles in viral infection. Participates in the opening of the viral DNA origin to initiate replication by interacting with the origin-binding protein. May disrupt loops, hairpins and other secondary structures present on ssDNA to reduce and eliminate pausing of viral DNA polymerase at specific sites during elongation. Promotes viral DNA recombination by performing strand-transfer, characterized by the ability to transfer a DNA strand from a linear duplex to a complementary single-stranded DNA circle. Can also catalyze the renaturation of complementary single strands. Additionally, reorganizes the host cell nucleus, leading to the formation of prereplicative sites and replication compartments. This process is driven by the protein which can form double-helical filaments in the absence of DNA. In Homo sapiens (Human), this protein is Major DNA-binding protein.